Here is a 265-residue protein sequence, read N- to C-terminus: Protein Exd1 homolog (265 aa).

One can recognise a 3'-5' exonuclease domain in the interval 32 to 82 (EKQLDRIVLIYQVDTTYHSALKDIKDQKIISLLVEPSFYGRHHPTSILVVA).

Belongs to the EXD1 family. In terms of assembly, homodimer.

In terms of biological role, RNA-binding protein. Inactive exonuclease. The protein is Protein Exd1 homolog of Drosophila melanogaster (Fruit fly).